Reading from the N-terminus, the 901-residue chain is Alanine--tRNA ligase (901 aa).

Residues histidine 581, histidine 585, cysteine 684, and histidine 688 each contribute to the Zn(2+) site.

Belongs to the class-II aminoacyl-tRNA synthetase family. Zn(2+) is required as a cofactor.

It localises to the cytoplasm. The enzyme catalyses tRNA(Ala) + L-alanine + ATP = L-alanyl-tRNA(Ala) + AMP + diphosphate. Catalyzes the attachment of alanine to tRNA(Ala) in a two-step reaction: alanine is first activated by ATP to form Ala-AMP and then transferred to the acceptor end of tRNA(Ala). Also edits incorrectly charged Ser-tRNA(Ala) and Gly-tRNA(Ala) via its editing domain. The polypeptide is Alanine--tRNA ligase (Mycobacterium ulcerans (strain Agy99)).